A 140-amino-acid polypeptide reads, in one-letter code: Vesicle transport protein GOT1 (140 aa).

The next 4 helical transmembrane spans lie at 12–32, 35–55, 71–91, and 96–116; these read IGLGLTGFGVFFTFLGVIFVF, GLIAMGNILFLAGVTLTIGIN, ISFGLGFLLVVFGWPIFGLLL, and FLVLFSGFWPTLAVFLQRIPL.

The protein belongs to the GOT1 family. As to quaternary structure, homodimer. No interactions with STL1, STL2, CESA1, CESA3, CESA4, CESA6, CESA7 or CESA8.

The protein localises to the golgi apparatus membrane. In terms of biological role, may be involved in fusion of ER-derived transport vesicles with the Golgi complex. The chain is Vesicle transport protein GOT1 from Arabidopsis thaliana (Mouse-ear cress).